A 1134-amino-acid chain; its full sequence is MMS19 nucleotide excision repair protein homolog (1134 aa).

HEAT repeat units follow at residues 959 to 998 (QRCFSTIVPILESLIMNSQTSLSRTMLHVALAHVISNVPV), 1002 to 1047 (LDNT…KGQQ), 1050 to 1089 (SDNAHIIIECLIKLTSYPHLMVVRETSIQCLVALLELPHR), and 1092 to 1130 (YPFRREVLQAIEKSLDDPKRKVREEAIRCRQAWASITSG).

Belongs to the MET18/MMS19 family. Part of a complex composed of AE7, CIA1, MMS19 and NAR1. Interacts with AE7.

The protein localises to the nucleus. It is found in the cytoplasm. Functionally, may select specific target apoproteins to which a Fe-S cluster produced by the cytosolic iron-sulfur (Fe-S) protein assembly (CIA) pathway is transferred. The sequence is that of MMS19 nucleotide excision repair protein homolog from Arabidopsis thaliana (Mouse-ear cress).